Here is a 203-residue protein sequence, read N- to C-terminus: uncharacterized protein (203 aa).

The chain crosses the membrane as a helical span at residues 180–200 (VYLLLFGIPLLILIFLIIFFI).

It is found in the virion. Its subcellular location is the host membrane. This is an uncharacterized protein from Acanthamoeba polyphaga (Amoeba).